Consider the following 259-residue polypeptide: tRNA (guanine-N(7)-)-methyltransferase (259 aa).

Residues Gly80, 103-104 (EL), 136-137 (NS), and Leu156 contribute to the S-adenosyl-L-methionine site. Asp159 is an active-site residue. 234–236 (TEE) is an S-adenosyl-L-methionine binding site.

It belongs to the class I-like SAM-binding methyltransferase superfamily. TrmB family.

The protein resides in the nucleus. The catalysed reaction is guanosine(46) in tRNA + S-adenosyl-L-methionine = N(7)-methylguanosine(46) in tRNA + S-adenosyl-L-homocysteine. Its pathway is tRNA modification; N(7)-methylguanine-tRNA biosynthesis. Functionally, catalyzes the formation of N(7)-methylguanine at position 46 (m7G46) in tRNA. The polypeptide is tRNA (guanine-N(7)-)-methyltransferase (Oryza sativa subsp. indica (Rice)).